The primary structure comprises 89 residues: Small ribosomal subunit protein uS17 (89 aa).

Belongs to the universal ribosomal protein uS17 family. In terms of assembly, part of the 30S ribosomal subunit.

One of the primary rRNA binding proteins, it binds specifically to the 5'-end of 16S ribosomal RNA. This chain is Small ribosomal subunit protein uS17, found in Chlorobaculum tepidum (strain ATCC 49652 / DSM 12025 / NBRC 103806 / TLS) (Chlorobium tepidum).